Reading from the N-terminus, the 356-residue chain is L-lactate dehydrogenase A (356 aa).

NAD(+)-binding positions include 75 to 80 (DALPDK) and Arg121. 3 residues coordinate substrate: Arg128, Asn160, and Arg191. Asn160 provides a ligand contact to NAD(+). His215 functions as the Proton acceptor in the catalytic mechanism. Thr270 is a substrate binding site.

The protein belongs to the LDH/MDH superfamily. LDH family. As to quaternary structure, tetramer that arise from random association of LDH-A and LDH-B.

The enzyme catalyses (S)-lactate + NAD(+) = pyruvate + NADH + H(+). It functions in the pathway fermentation; pyruvate fermentation to lactate; (S)-lactate from pyruvate: step 1/1. The polypeptide is L-lactate dehydrogenase A (Hordeum vulgare (Barley)).